The following is a 288-amino-acid chain: Bis(5'-nucleosyl)-tetraphosphatase, symmetrical (288 aa).

Belongs to the Ap4A hydrolase family.

The catalysed reaction is P(1),P(4)-bis(5'-adenosyl) tetraphosphate + H2O = 2 ADP + 2 H(+). In terms of biological role, hydrolyzes diadenosine 5',5'''-P1,P4-tetraphosphate to yield ADP. This chain is Bis(5'-nucleosyl)-tetraphosphatase, symmetrical, found in Baumannia cicadellinicola subsp. Homalodisca coagulata.